The primary structure comprises 306 residues: Putative lipid kinase Sca_1050 (306 aa).

The DAGKc domain maps to 3–139 (QHFHRGILFY…FDVLKVNDTY (137 aa)). Residues Ser-44, 74–80 (GDGTVNE), and Thr-101 each bind ATP. Mg(2+) contacts are provided by Ser-220, Asp-223, and Glu-225. Glu-281 (proton acceptor) is an active-site residue.

Belongs to the diacylglycerol/lipid kinase family. Mg(2+) is required as a cofactor.

Functionally, may catalyze the ATP-dependent phosphorylation of lipids other than diacylglycerol (DAG). In Staphylococcus carnosus (strain TM300), this protein is Putative lipid kinase Sca_1050.